Here is a 75-residue protein sequence, read N- to C-terminus: Small ribosomal subunit protein bS18c (75 aa).

Belongs to the bacterial ribosomal protein bS18 family. In terms of assembly, part of the 30S ribosomal subunit.

The protein resides in the plastid. It is found in the chloroplast. This chain is Small ribosomal subunit protein bS18c, found in Psilotum nudum (Whisk fern).